We begin with the raw amino-acid sequence, 263 residues long: Protein maestro (263 aa).

The disordered stretch occupies residues 1-21; that stretch reads MDQTPRRMLGQPLSSPATQPK. Residues 128 to 163 form an HEAT repeat; it reads SFFIDITLQTRTLLDDENDSLRYSAFVLFGQLADLA.

The protein resides in the nucleus. It localises to the nucleolus. This Bos taurus (Bovine) protein is Protein maestro (MRO).